Consider the following 394-residue polypeptide: D-mannose isomerase (394 aa).

Active-site proton donor/acceptor residues include histidine 251 and histidine 380.

It belongs to the N-acylglucosamine 2-epimerase family. Monomer.

It carries out the reaction D-mannose = D-fructose. The enzyme catalyses D-lyxose = D-xylulose. Its function is as follows. Catalyzes the reversible isomerization of D-mannose to D-fructose. Can also isomerize D-lyxose, with lower efficiency. In longer reaction with a higher concentration of enzyme, it can isomerize 4-OH D-mannose derivatives (D-talose and 4-O-monosaccharyl-D-mannose). Cannot use D-glucose. The chain is D-mannose isomerase from Marinomonas mediterranea (strain ATCC 700492 / JCM 21426 / NBRC 103028 / MMB-1).